A 2191-amino-acid polypeptide reads, in one-letter code: FRAS1-related extracellular matrix protein 1 (2191 aa).

The signal sequence occupies residues 1–29; that stretch reads MHSPGCTGPKAQWFLLLQLLLLHLDRVSA. Positions 205 to 207 match the Cell attachment site motif; the sequence is RGD. 3 CSPG repeats span residues 300–394, 419–506, and 527–621; these read VPRA…MELE, APRV…FRIF, and PPFL…FVLW. N-linked (GlcNAc...) asparagine glycosylation occurs at asparagine 341. Residues asparagine 566 and asparagine 628 are each glycosylated (N-linked (GlcNAc...) asparagine). CSPG repeat units follow at residues 648–779, 801–892, and 912–1007; these read KEAP…VSVS, QVPE…LEVT, and EPPI…LVVS. Asparagine 1039 is a glycosylation site (N-linked (GlcNAc...) asparagine). 6 CSPG repeats span residues 1049-1151, 1172-1273, 1294-1391, 1412-1504, 1525-1614, and 1650-1742; these read PPSI…VYAT, EAPD…IQLS, TPTL…FYLW, GDIV…FTIS, LPVL…FLAT, and HLHS…FQAM. Asparagine 1180 carries an N-linked (GlcNAc...) asparagine glycan. Asparagine 1584 is a glycosylation site (N-linked (GlcNAc...) asparagine). Positions 1749 to 1848 constitute a Calx-beta domain; sequence ATPQSLDLRW…DDEVFEVILN (100 aa). The tract at residues 1874-1921 is disordered; it reads HPSNSFNQSKHSTWGKGPWHPLPSGSSSLTTSGSPLLERPPPSFTSGD. Residues 1875–1885 are compositionally biased toward polar residues; the sequence is PSNSFNQSKHS. Low complexity predominate over residues 1895–1910; the sequence is LPSGSSSLTTSGSPLL. Positions 2072-2186 constitute a C-type lectin domain; it reads HSGYCHILVT…CSKGKAHNFV (115 aa). Cysteine 2163 and cysteine 2177 are joined by a disulfide.

Belongs to the FRAS1 family. As to quaternary structure, interacts with FREM2. In terms of tissue distribution, expressed in epidermis and hair follicles. Expressed in many developing epidermal appendages, including the whisker and sensory vibrissae, cranial and trunk hair follicles, meibomian glands, teeth, footpads, eyelash primordia and invaginating mammary glands. Limb expression localizes to sheets of dermal cells on the apical and basal surfaces of the digits but, unlike FRAS1, is excluded from the apical ectodermal ridge. Usually expressed at higher level in dermal cells underlying the differentiating epithelial components, especially underlying the epidermis of the head, limbs, and eyelids. Expression in the eyelid dermis is apparent as early as 13 dpc. Postnatal expression in the skin is limited to the dermal papillae. In the kidney, it is expressed from 12.5 dpc in the mesenchyme surrounding the branching ureteric tree, with a strong expression in the more proximal regions of these tubules rather than at the proliferating and branching ends of the ureteric buds. In hair follicle, it is selectively expressed in the vibrissal hair primordia during development. Preferentially expressed in the whisker pad epithelia of 12.5 dpc embryos, in both the epithelial and mesenchymal cells of developing hair follicles. In the early stages of hair follicle development (i.e. stages 0-1), it is expressed in both hair placodes and dermal condensations. In stage 2, it is detected in dermal condensations and adjacent epithelia, but not in the upper region of the hair follicles. Expressed at the tip of developing hair follicles in the later stages (i.e. stages 3-5).

It is found in the secreted. Its subcellular location is the extracellular space. The protein localises to the extracellular matrix. It localises to the basement membrane. Functionally, extracellular matrix protein that plays a role in epidermal differentiation and is required for epidermal adhesion during embryonic development. The sequence is that of FRAS1-related extracellular matrix protein 1 (Frem1) from Mus musculus (Mouse).